We begin with the raw amino-acid sequence, 475 residues long: Ribulose bisphosphate carboxylase large chain (475 aa).

Lys-14 carries the post-translational modification N6,N6,N6-trimethyllysine. Substrate is bound by residues Asn-123 and Thr-173. The Proton acceptor role is filled by Lys-175. Substrate is bound at residue Lys-177. 3 residues coordinate Mg(2+): Lys-201, Asp-203, and Glu-204. The residue at position 201 (Lys-201) is an N6-carboxylysine. The Proton acceptor role is filled by His-294. Substrate-binding residues include Arg-295, His-327, and Ser-379.

This sequence belongs to the RuBisCO large chain family. Type I subfamily. As to quaternary structure, heterohexadecamer of 8 large chains and 8 small chains; disulfide-linked. The disulfide link is formed within the large subunit homodimers. It depends on Mg(2+) as a cofactor. In terms of processing, the disulfide bond which can form in the large chain dimeric partners within the hexadecamer appears to be associated with oxidative stress and protein turnover.

The protein localises to the plastid. It catalyses the reaction 2 (2R)-3-phosphoglycerate + 2 H(+) = D-ribulose 1,5-bisphosphate + CO2 + H2O. The enzyme catalyses D-ribulose 1,5-bisphosphate + O2 = 2-phosphoglycolate + (2R)-3-phosphoglycerate + 2 H(+). RuBisCO catalyzes two reactions: the carboxylation of D-ribulose 1,5-bisphosphate, the primary event in carbon dioxide fixation, as well as the oxidative fragmentation of the pentose substrate in the photorespiration process. Both reactions occur simultaneously and in competition at the same active site. In Euglena longa (Euglenophycean alga), this protein is Ribulose bisphosphate carboxylase large chain (rbcL).